A 531-amino-acid chain; its full sequence is UDP-glucuronosyltransferase 1A5 (531 aa).

The N-terminal stretch at 1-25 (MGLHVTLQGLAGLLLLLYALPWAEG) is a signal peptide. N-linked (GlcNAc...) asparagine glycosylation is found at Asn116, Asn131, Asn139, Asn293, and Asn431. The chain crosses the membrane as a helical span at residues 489–505 (VIGFLLAIVLTVVFIVY).

Belongs to the UDP-glycosyltransferase family. In terms of assembly, homodimer. Homooligomer. Interacts with UGT1A1, UGT1A3, UGT1A4, UGT1A6, UGT1A7, UGT1A8, UGT1A9 and UGT1A10 to form heterodimers.

Its subcellular location is the endoplasmic reticulum membrane. It carries out the reaction glucuronate acceptor + UDP-alpha-D-glucuronate = acceptor beta-D-glucuronoside + UDP + H(+). It catalyses the reaction zolasartan + UDP-alpha-D-glucuronate = zolarsartan-1-N-beta-D-glucuronide + UDP. Its function is as follows. UDP-glucuronosyltransferase (UGT) that catalyzes phase II biotransformation reactions in which lipophilic substrates are conjugated with glucuronic acid to increase the metabolite's water solubility, thereby facilitating excretion into either the urine or bile. Essential for the elimination and detoxification of drugs, xenobiotics and endogenous compounds. Involved in the glucuronidation of the AGTR1 angiotensin receptor antagonist zolarsatan, a drug which can inhibit the effect of angiotensin II. This is UDP-glucuronosyltransferase 1A5 from Rattus norvegicus (Rat).